The following is a 492-amino-acid chain: Glutamyl-tRNA(Gln) amidotransferase subunit A (492 aa).

Catalysis depends on charge relay system residues K81 and S156. The Acyl-ester intermediate role is filled by S180.

This sequence belongs to the amidase family. GatA subfamily. As to quaternary structure, heterotrimer of A, B and C subunits.

It catalyses the reaction L-glutamyl-tRNA(Gln) + L-glutamine + ATP + H2O = L-glutaminyl-tRNA(Gln) + L-glutamate + ADP + phosphate + H(+). Its function is as follows. Allows the formation of correctly charged Gln-tRNA(Gln) through the transamidation of misacylated Glu-tRNA(Gln) in organisms which lack glutaminyl-tRNA synthetase. The reaction takes place in the presence of glutamine and ATP through an activated gamma-phospho-Glu-tRNA(Gln). The sequence is that of Glutamyl-tRNA(Gln) amidotransferase subunit A from Rhodococcus erythropolis (strain PR4 / NBRC 100887).